The sequence spans 451 residues: Multidrug export protein MepA (451 aa).

Transmembrane regions (helical) follow at residues Met-26–Leu-46, Ile-52–Phe-72, Ser-97–Phe-117, Leu-139–Ala-159, Ile-170–Phe-190, Val-194–Ile-214, Ile-245–Leu-265, Leu-282–Ala-302, Ala-318–Gly-338, Ala-355–Phe-375, Ile-390–Phe-410, and Trp-417–Leu-437.

The protein belongs to the multi antimicrobial extrusion (MATE) (TC 2.A.66.1) family. MepA subfamily.

It is found in the cell membrane. Functionally, multidrug resistance efflux protein. The polypeptide is Multidrug export protein MepA (mepA) (Staphylococcus aureus (strain bovine RF122 / ET3-1)).